We begin with the raw amino-acid sequence, 614 residues long: 1-deoxy-D-xylulose-5-phosphate synthase (614 aa).

Thiamine diphosphate is bound by residues histidine 74 and 115-117; that span reads GHS. Aspartate 146 lines the Mg(2+) pocket. Thiamine diphosphate is bound by residues 147–148, asparagine 175, tyrosine 282, and glutamate 363; that span reads GA. Asparagine 175 is a binding site for Mg(2+).

This sequence belongs to the transketolase family. DXPS subfamily. In terms of assembly, homodimer. It depends on Mg(2+) as a cofactor. Thiamine diphosphate is required as a cofactor.

The enzyme catalyses D-glyceraldehyde 3-phosphate + pyruvate + H(+) = 1-deoxy-D-xylulose 5-phosphate + CO2. It participates in metabolic intermediate biosynthesis; 1-deoxy-D-xylulose 5-phosphate biosynthesis; 1-deoxy-D-xylulose 5-phosphate from D-glyceraldehyde 3-phosphate and pyruvate: step 1/1. Catalyzes the acyloin condensation reaction between C atoms 2 and 3 of pyruvate and glyceraldehyde 3-phosphate to yield 1-deoxy-D-xylulose-5-phosphate (DXP). The protein is 1-deoxy-D-xylulose-5-phosphate synthase of Methylobacillus flagellatus (strain ATCC 51484 / DSM 6875 / VKM B-1610 / KT).